We begin with the raw amino-acid sequence, 345 residues long: uncharacterized protein (345 aa).

Helical transmembrane passes span 23 to 43 and 56 to 76; these read VVGF…YSYV and FLIA…FVAL. Positions 326–345 are disordered; the sequence is VTEPTTNSKRKPVKAKKAKK. Basic residues predominate over residues 333-345; it reads SKRKPVKAKKAKK.

It is found in the cell membrane. This is an uncharacterized protein from Mycoplasma pneumoniae (strain ATCC 29342 / M129 / Subtype 1) (Mycoplasmoides pneumoniae).